The following is a 131-amino-acid chain: Nitrogenase-stabilizing/protective protein NifW (131 aa).

This sequence belongs to the NifW family. In terms of assembly, homotrimer; associates with NifD.

May protect the nitrogenase Fe-Mo protein from oxidative damage. In Frankia alni (strain DSM 45986 / CECT 9034 / ACN14a), this protein is Nitrogenase-stabilizing/protective protein NifW.